The primary structure comprises 199 residues: NAD(P)H dehydrogenase (quinone) (199 aa).

One can recognise a Flavodoxin-like domain in the interval 4–190 (ILVLYYSTYG…DGARFQGRHV (187 aa)). FMN-binding positions include 10–15 (STYGHI) and 78–80 (TRF). Residue Tyr-12 participates in NAD(+) binding. Trp-98 serves as a coordination point for substrate. FMN-binding positions include 113–119 (STATQHG) and His-134.

The protein belongs to the WrbA family. Requires FMN as cofactor.

The enzyme catalyses a quinone + NADH + H(+) = a quinol + NAD(+). It catalyses the reaction a quinone + NADPH + H(+) = a quinol + NADP(+). This Rhizorhabdus wittichii (strain DSM 6014 / CCUG 31198 / JCM 15750 / NBRC 105917 / EY 4224 / RW1) (Sphingomonas wittichii) protein is NAD(P)H dehydrogenase (quinone).